A 337-amino-acid chain; its full sequence is Dimethyladenosine transferase 1, mitochondrial (337 aa).

The transit peptide at 1 to 84 (MSQVTARVLN…RSILRRQPQR (84 aa)) directs the protein to the mitochondrion. Residues 38–41 (QNFL), Asn39, Leu41, Gly67, Glu89, Asp118, and Asn140 contribute to the S-adenosyl-L-methionine site.

It belongs to the class I-like SAM-binding methyltransferase superfamily. rRNA adenine N(6)-methyltransferase family. KsgA subfamily.

It is found in the mitochondrion. Probable S-adenosyl-L-methionine-dependent methyltransferase which specifically dimethylates mitochondrial 12S rRNA at the conserved stem loop. The protein is Dimethyladenosine transferase 1, mitochondrial (mtTFB1) of Drosophila pseudoobscura pseudoobscura (Fruit fly).